Here is a 321-residue protein sequence, read N- to C-terminus: Aspartate carbamoyltransferase catalytic subunit (321 aa).

Positions 60 and 61 each coordinate carbamoyl phosphate. Lys-88 serves as a coordination point for L-aspartate. Carbamoyl phosphate contacts are provided by Arg-110, His-138, and Gln-141. Residues Arg-171 and Arg-225 each coordinate L-aspartate. Carbamoyl phosphate-binding residues include Gly-266 and Pro-267.

It belongs to the aspartate/ornithine carbamoyltransferase superfamily. ATCase family. Heterododecamer (2C3:3R2) of six catalytic PyrB chains organized as two trimers (C3), and six regulatory PyrI chains organized as three dimers (R2).

The catalysed reaction is carbamoyl phosphate + L-aspartate = N-carbamoyl-L-aspartate + phosphate + H(+). It participates in pyrimidine metabolism; UMP biosynthesis via de novo pathway; (S)-dihydroorotate from bicarbonate: step 2/3. Catalyzes the condensation of carbamoyl phosphate and aspartate to form carbamoyl aspartate and inorganic phosphate, the committed step in the de novo pyrimidine nucleotide biosynthesis pathway. This is Aspartate carbamoyltransferase catalytic subunit from Sorangium cellulosum (strain So ce56) (Polyangium cellulosum (strain So ce56)).